Here is a 481-residue protein sequence, read N- to C-terminus: 4-hydroxyphenylacetate 3-monooxygenase oxygenase component (481 aa).

Residues 100–104 (RSPDY) and H142 contribute to the substrate site. FAD-binding positions include 142–144 (HAL), 148–151 (QVNR), and T185. Residue 197-198 (ST) coordinates substrate. 444 to 447 (DPVR) provides a ligand contact to FAD.

It belongs to the FADH(2)-utilizing monooxygenase family. Homotetramer consisting of a dimer of dimers. 4-HPA 3-monooxygenase consists of a reductase component HpaC and an oxygenase component HpaB.

It carries out the reaction 4-hydroxyphenylacetate + FADH2 + O2 = 3,4-dihydroxyphenylacetate + FAD + H2O + H(+). It participates in aromatic compound metabolism; 4-hydroxyphenylacetate degradation; pyruvate and succinate semialdehyde from 4-hydroxyphenylacetate: step 1/7. Utilizes FADH(2) supplied by HpaC, to catalyze the hydroxylation of 4-hydroxyphenylacetic acid, leading to the production of 3,4-dihydroxyphenylacetic acid (DHPA). The chain is 4-hydroxyphenylacetate 3-monooxygenase oxygenase component from Thermus thermophilus (strain ATCC 27634 / DSM 579 / HB8).